We begin with the raw amino-acid sequence, 398 residues long: Cysteine protease ATG4A (398 aa).

Residue Cys-77 is the Nucleophile of the active site. Catalysis depends on residues Asp-279 and His-281. The LIR signature appears at Phe-393 to Leu-396.

The protein belongs to the peptidase C54 family. In terms of assembly, interacts with ATG9A; the interaction is direct.

The protein resides in the cytoplasm. It catalyses the reaction [protein]-C-terminal L-amino acid-glycyl-phosphatidylethanolamide + H2O = [protein]-C-terminal L-amino acid-glycine + a 1,2-diacyl-sn-glycero-3-phosphoethanolamine. Inhibited by N-ethylmaleimide. Redox-regulated during autophagy since reducing conditions activate ATG4A whereas an oxidizing environment such as the presence of H(2)O(2) inhibits its activity. Cysteine protease that plays a key role in autophagy by mediating both proteolytic activation and delipidation of ATG8 family proteins. The protease activity is required for proteolytic activation of ATG8 family proteins: cleaves the C-terminal amino acid of ATG8 proteins to reveal a C-terminal glycine. Exposure of the glycine at the C-terminus is essential for ATG8 proteins conjugation to phosphatidylethanolamine (PE) and insertion to membranes, which is necessary for autophagy. Preferred substrate is GABARAPL2 followed by MAP1LC3A and GABARAP. Protease activity is also required to counteract formation of high-molecular weight conjugates of ATG8 proteins (ATG8ylation): acts as a deubiquitinating-like enzyme that removes ATG8 conjugated to other proteins, such as ATG3. In addition to the protease activity, also mediates delipidation of ATG8 family proteins. Catalyzes delipidation of PE-conjugated forms of ATG8 proteins during macroautophagy. Compared to ATG4B, the major protein for proteolytic activation of ATG8 proteins, shows weaker ability to cleave the C-terminal amino acid of ATG8 proteins, while it displays stronger delipidation activity. Involved in phagophore growth during mitophagy independently of its protease activity and of ATG8 proteins: acts by regulating ATG9A trafficking to mitochondria and promoting phagophore-endoplasmic reticulum contacts during the lipid transfer phase of mitophagy. Functionally, (Microbial infection) Mediates cleavage of an ATG8 protein homolog coded in the genome of cytopathogenic bovine viral diarrhea virus (BVDV). The chain is Cysteine protease ATG4A from Bos taurus (Bovine).